The primary structure comprises 762 residues: 5-methyltetrahydropteroyltriglutamate--homocysteine methyltransferase (762 aa).

5-methyltetrahydropteroyltri-L-glutamate contacts are provided by residues 17-20 (REWK) and Lys111. L-homocysteine is bound by residues 435–437 (IGS) and Glu488. L-methionine is bound by residues 435-437 (IGS) and Glu488. 5-methyltetrahydropteroyltri-L-glutamate is bound by residues 519-520 (RC) and Trp565. Asp603 contacts L-homocysteine. Asp603 is an L-methionine binding site. Glu609 lines the 5-methyltetrahydropteroyltri-L-glutamate pocket. Positions 645, 647, and 669 each coordinate Zn(2+). His698 serves as the catalytic Proton donor. Cys730 lines the Zn(2+) pocket.

It belongs to the vitamin-B12 independent methionine synthase family. Requires Zn(2+) as cofactor.

The enzyme catalyses 5-methyltetrahydropteroyltri-L-glutamate + L-homocysteine = tetrahydropteroyltri-L-glutamate + L-methionine. It functions in the pathway amino-acid biosynthesis; L-methionine biosynthesis via de novo pathway; L-methionine from L-homocysteine (MetE route): step 1/1. Catalyzes the transfer of a methyl group from 5-methyltetrahydrofolate to homocysteine resulting in methionine formation. In Bacillus thuringiensis subsp. konkukian (strain 97-27), this protein is 5-methyltetrahydropteroyltriglutamate--homocysteine methyltransferase.